The primary structure comprises 281 residues: Auxin-responsive protein IAA19 (281 aa).

The short motif at 40 to 44 (LRLGL) is the EAR-like (transcriptional repression) element. The interval 66-126 (LGPAPPPRGG…AAGAPRAAKA (61 aa)) is disordered. The span at 79-91 (GFVDSLDRSEGRR) shows a compositional bias: basic and acidic residues. Over residues 114 to 126 (GEAAAGAPRAAKA) the composition is skewed to low complexity. In terms of domain architecture, PB1 spans 161–265 (CCYVKVSMDG…RKLRIMRGSD (105 aa)).

Belongs to the Aux/IAA family. Homodimers and heterodimers. In terms of tissue distribution, expressed in etiolated seedlings and flowers.

It localises to the nucleus. Aux/IAA proteins are short-lived transcriptional factors that function as repressors of early auxin response genes at low auxin concentrations. The sequence is that of Auxin-responsive protein IAA19 (IAA19) from Oryza sativa subsp. japonica (Rice).